A 627-amino-acid polypeptide reads, in one-letter code: Chaperone protein HtpG (627 aa).

Residues 1–339 (MKGQETRGFQ…SNDLPLNVSR (339 aa)) form an a; substrate-binding region. The segment at 340-555 (EILQDSRVTQ…ADEMSTQMAK (216 aa)) is b. The interval 556–627 (LFAAAGQQAP…IRRMNQLLSA (72 aa)) is c.

It belongs to the heat shock protein 90 family. In terms of assembly, homodimer.

The protein localises to the cytoplasm. Molecular chaperone. Has ATPase activity. The chain is Chaperone protein HtpG from Pectobacterium atrosepticum (strain SCRI 1043 / ATCC BAA-672) (Erwinia carotovora subsp. atroseptica).